Here is an 84-residue protein sequence, read N- to C-terminus: Short neurotoxin SNTX-1 (84 aa).

An N-terminal signal peptide occupies residues 1 to 21 (MKTLLLILVVVTIVCLDLVCC). 4 disulfides stabilise this stretch: cysteine 25-cysteine 46, cysteine 39-cysteine 63, cysteine 65-cysteine 76, and cysteine 77-cysteine 82.

The protein belongs to the three-finger toxin family. Short-chain subfamily. Type I alpha-neurotoxin sub-subfamily. In terms of tissue distribution, expressed by the venom gland.

Its subcellular location is the secreted. Functionally, binds to muscle nicotinic acetylcholine receptor (nAChR) and inhibit acetylcholine from binding to the receptor, thereby impairing neuromuscular transmission. The polypeptide is Short neurotoxin SNTX-1 (Demansia vestigiata (Lesser black whip snake)).